Consider the following 212-residue polypeptide: Imidazole glycerol phosphate synthase subunit HisH (212 aa).

Residues 4 to 210 (NIGIIDYGMG…LKWLHEKNSD (207 aa)) form the Glutamine amidotransferase type-1 domain. Cysteine 82 serves as the catalytic Nucleophile. Catalysis depends on residues histidine 185 and glutamate 187.

In terms of assembly, heterodimer of HisH and HisF.

It localises to the cytoplasm. The enzyme catalyses 5-[(5-phospho-1-deoxy-D-ribulos-1-ylimino)methylamino]-1-(5-phospho-beta-D-ribosyl)imidazole-4-carboxamide + L-glutamine = D-erythro-1-(imidazol-4-yl)glycerol 3-phosphate + 5-amino-1-(5-phospho-beta-D-ribosyl)imidazole-4-carboxamide + L-glutamate + H(+). It carries out the reaction L-glutamine + H2O = L-glutamate + NH4(+). It participates in amino-acid biosynthesis; L-histidine biosynthesis; L-histidine from 5-phospho-alpha-D-ribose 1-diphosphate: step 5/9. Functionally, IGPS catalyzes the conversion of PRFAR and glutamine to IGP, AICAR and glutamate. The HisH subunit catalyzes the hydrolysis of glutamine to glutamate and ammonia as part of the synthesis of IGP and AICAR. The resulting ammonia molecule is channeled to the active site of HisF. This chain is Imidazole glycerol phosphate synthase subunit HisH, found in Prochlorococcus marinus (strain MIT 9211).